The sequence spans 254 residues: Casein kinase II subunit beta-2 (254 aa).

The protein belongs to the casein kinase 2 subunit beta family. In terms of assembly, tetramer composed of two alpha chains, one beta chain and one beta' chain. Phosphorylated by alpha subunit.

Functionally, regulatory subunit of casein kinase II/CK2. As part of the kinase complex regulates the basal catalytic activity of the alpha subunit a constitutively active serine/threonine-protein kinase that phosphorylates a large number of substrates containing acidic residues C-terminal to the phosphorylated serine or threonine. This Schizosaccharomyces pombe (strain 972 / ATCC 24843) (Fission yeast) protein is Casein kinase II subunit beta-2.